Here is a 729-residue protein sequence, read N- to C-terminus: MSWLNSVLLALTSVQPYMVPATVIGLVSFAFLCFIFFYFFRAVKIINGLKKYTQSINGIENNEPGNQLQHLQSLFVQPELKHAWNEFEESLHSQYELEDGEEKIVRIRATAPSASFFSEQQLVDIPLNTEFFKHLPGILTGVGIIGTFYGLMIGLNHFDPSTPEQVSSSVNNLLRDVLYAFLGSAFAITFSILITWLEKFCLAKCYKYLEKFTAALDALYDSGVGEEYLASLVKSSNESATQARHLKESLVTDLRDMLLHLANSQKVENERLATTLSTTYRETGQQFAEQVSGAIENSLKSPLDKIAGAVQTASGDQSGMVQNMLQDVLTAFMAKLDTTFGQQFTNLNEMMGQTVGAIQTMQTGFGALLQDMRQVSDDSRQGSAQLIEQLLSEMKSGQQAMQAGMNDMLTSLQTSVAKIGAEGEGAGERMARQLEKMFADSEAREKAQAEHMTAFIEAIQNSVQQGQSATMEKMAASVESLGEQLGSLFGQIDKGQQQISANQQANQQSLHEQTQRVMSEVDDQIKQLVETVASQHQGTTETLRLLAEQTNRQIQDMHTGADKMRLAAERFEHAGDRVSEANHLTADVLNKAQSAGSSLSLATSELTSVVADYRNNREAVSKSIAMLELLAANTQSEQTTRTQFIADLKQHGERLQSYNREAQAFMENVSDVLGKGFEDFSEGVSRSLDKTLGKLDVEMAKASTLLAGSVEQIGESVSELDDVLSRVRA.

Helical transmembrane passes span 20-40, 135-155, and 177-197; these read PATV…FYFF, LPGI…MIGL, and VLYA…ITWL.

This sequence belongs to the MotA family.

The protein resides in the cell inner membrane. Component of antiviral defense system Zorya type I, composed of ZorA, ZorB, ZorC and ZorD. Expression of Zorya type I in E.coli (strain MG1655) confers 10,000-fold resistance to phage SECphi27, 100-fold resistance to lambda, and 10-fold resistance to T7. While most T7 infected Zorya-containing cells undergo abortive infection, a minority produce viable phage progeny. These eventually accumulate to a high multiplicity of infection, leading to culture collapse by 2 hours after initial infection. ZorA and ZorB probably assemble in the cell inner membrane and exert their effect there. The polypeptide is Zorya protein ZorA (Escherichia coli O139:H28 (strain E24377A / ETEC)).